Consider the following 393-residue polypeptide: Elongation factor Tu (393 aa).

The 194-residue stretch at 10 to 203 (KPHVNIGTIG…AVDEFIPEPV (194 aa)) folds into the tr-type G domain. Residues 19-26 (GHVDHGKT) form a G1 region. Residue 19 to 26 (GHVDHGKT) participates in GTP binding. T26 lines the Mg(2+) pocket. Residues 60–64 (GITIS) form a G2 region. Residues 81–84 (DCPG) form a G3 region. Residues 81–85 (DCPGH) and 136–139 (NKVD) each bind GTP. The segment at 136 to 139 (NKVD) is G4. Residues 173 to 175 (SAL) form a G5 region.

It belongs to the TRAFAC class translation factor GTPase superfamily. Classic translation factor GTPase family. EF-Tu/EF-1A subfamily. As to quaternary structure, monomer.

It is found in the cytoplasm. The enzyme catalyses GTP + H2O = GDP + phosphate + H(+). Its function is as follows. GTP hydrolase that promotes the GTP-dependent binding of aminoacyl-tRNA to the A-site of ribosomes during protein biosynthesis. The chain is Elongation factor Tu from Chlorobium limicola (strain DSM 245 / NBRC 103803 / 6330).